We begin with the raw amino-acid sequence, 279 residues long: Apolipoprotein L domain-containing protein 1 (279 aa).

Transmembrane regions (helical) follow at residues 83 to 105 (SLVA…IVGL), 122 to 142 (GLGV…SLIF), and 192 to 212 (IALY…FLIP). A coiled-coil region spans residues 226–253 (LKAKIQKLAESLESCTGALDELSEQLES).

This sequence belongs to the apolipoprotein L family. In terms of tissue distribution, expressed in neonatal dermal microvascular endothelial cells.

It is found in the cell membrane. The protein resides in the cell junction. It localises to the cytoplasmic vesicle. The protein localises to the secretory vesicle. In terms of biological role, is a modulator of endothelial barrier permeability, required for proper organization of endothelial cell-cell junctions and cytoskeleton. It also plays a role in the modulation of secretory autophagy. May affect blood-brain barrier permeability. This chain is Apolipoprotein L domain-containing protein 1 (APOLD1), found in Homo sapiens (Human).